Consider the following 181-residue polypeptide: MPQTDTAELVVLLDDDGRTIGSAPKAQVHHASTPLHLAFSCYLFDDAGRVLLTRRAVHKRTFPGIWTNTCCGHPAPGEALQDAVTRRVREELGVGITDLRCVLPDFRYRAVAADGVVENEVCPVFCGRAVGQVHPDRDEVADHVWVPWQHMRAAAEFGWAISPWAAEQVPLLDAAGIGHRD.

Mn(2+) is bound by residues His-29 and His-36. Positions 34–167 constitute a Nudix hydrolase domain; sequence PLHLAFSCYL…GWAISPWAAE (134 aa). Residue Cys-71 is part of the active site. A Mn(2+)-binding site is contributed by His-73. Mg(2+) is bound at residue Glu-91. The Mn(2+) site is built by Glu-118 and Glu-120. The active site involves Glu-120.

It belongs to the IPP isomerase type 1 family. Requires Mg(2+) as cofactor. It depends on Mn(2+) as a cofactor.

The protein localises to the cytoplasm. The catalysed reaction is isopentenyl diphosphate = dimethylallyl diphosphate. Its pathway is isoprenoid biosynthesis; dimethylallyl diphosphate biosynthesis; dimethylallyl diphosphate from isopentenyl diphosphate: step 1/1. In terms of biological role, catalyzes the 1,3-allylic rearrangement of the homoallylic substrate isopentenyl (IPP) to its highly electrophilic allylic isomer, dimethylallyl diphosphate (DMAPP). This is Isopentenyl-diphosphate Delta-isomerase from Mycolicibacterium vanbaalenii (strain DSM 7251 / JCM 13017 / BCRC 16820 / KCTC 9966 / NRRL B-24157 / PYR-1) (Mycobacterium vanbaalenii).